A 396-amino-acid chain; its full sequence is Aldo-keto reductase ausK (396 aa).

Position 76 (Asp76) interacts with NADP(+). Tyr81 functions as the Proton donor in the catalytic mechanism. His156 serves as a coordination point for substrate. NADP(+)-binding positions include 186-187 (CN), Gln212, 241-251 (DALGSGKFQSR), and 317-325 (RKIQHLHDN).

Belongs to the aldo/keto reductase family. Aldo/keto reductase 2 subfamily. As to quaternary structure, homodimer.

The protein operates within secondary metabolite biosynthesis; terpenoid biosynthesis. Its function is as follows. Aldo-keto reductase; part of the gene cluster that mediates the biosynthesis of calidodehydroaustin, a fungal meroterpenoid. The first step of the pathway is the synthesis of 3,5-dimethylorsellinic acid by the polyketide synthase ausA. 3,5-dimethylorsellinic acid is then prenylated by the polyprenyl transferase ausN. Further epoxidation by the FAD-dependent monooxygenase ausM and cyclization by the probable terpene cyclase ausL lead to the formation of protoaustinoid A. Protoaustinoid A is then oxidized to spiro-lactone preaustinoid A3 by the combined action of the FAD-binding monooxygenases ausB and ausC, and the dioxygenase ausE. Acid-catalyzed keto-rearrangement and ring contraction of the tetraketide portion of preaustinoid A3 by ausJ lead to the formation of preaustinoid A4. The aldo-keto reductase ausK, with the help of ausH, is involved in the next step by transforming preaustinoid A4 into isoaustinone which is in turn hydroxylated by the P450 monooxygenase ausI to form austinolide. The cytochrome P450 monooxygenase ausG modifies austinolide to austinol. Austinol is further acetylated to austin by the O-acetyltransferase ausP, which spontaneously changes to dehydroaustin. The cytochrome P450 monooxygenase ausR then converts dehydroaustin is into 7-dehydrodehydroaustin. The hydroxylation catalyzed by ausR permits the O-acetyltransferase ausQ to add an additional acetyl group to the molecule, leading to the formation of acetoxydehydroaustin. The short chain dehydrogenase ausT catalyzes the reduction of the double bond present between carbon atoms 1 and 2 to convert 7-dehydrodehydroaustin into 1,2-dihydro-7-hydroxydehydroaustin. AusQ catalyzes not only an acetylation reaction but also the addition of the PKS ausV diketide product to 1,2-dihydro-7-hydroxydehydroaustin, forming precalidodehydroaustin. Finally, the iron/alpha-ketoglutarate-dependent dioxygenase converts precalidodehydroaustin into calidodehydroaustin. The polypeptide is Aldo-keto reductase ausK (Aspergillus calidoustus).